Consider the following 206-residue polypeptide: Pyrrolidone-carboxylate peptidase 2 (206 aa).

Residues glutamate 78, cysteine 141, and histidine 165 contribute to the active site.

It belongs to the peptidase C15 family. As to quaternary structure, homotetramer.

It localises to the cytoplasm. It catalyses the reaction Release of an N-terminal pyroglutamyl group from a polypeptide, the second amino acid generally not being Pro.. Its function is as follows. Removes 5-oxoproline from various penultimate amino acid residues except L-proline. This Caldanaerobacter subterraneus subsp. tengcongensis (strain DSM 15242 / JCM 11007 / NBRC 100824 / MB4) (Thermoanaerobacter tengcongensis) protein is Pyrrolidone-carboxylate peptidase 2.